A 271-amino-acid polypeptide reads, in one-letter code: Regulatory protein RecX (271 aa).

The protein belongs to the RecX family.

The protein localises to the cytoplasm. Its function is as follows. Modulates RecA activity. In Geobacillus sp. (strain WCH70), this protein is Regulatory protein RecX.